The primary structure comprises 157 residues: Transcriptional repressor NrdR (157 aa).

A zinc finger spans residues 3–34 (CPFCRHPDSRVVDSRTSDDGLSIRRRRQCPEC). The ATP-cone domain maps to 46-136 (LSVIKRNGVV…VYQGFDSLDD (91 aa)).

It belongs to the NrdR family. Zn(2+) serves as cofactor.

Functionally, negatively regulates transcription of bacterial ribonucleotide reductase nrd genes and operons by binding to NrdR-boxes. The chain is Transcriptional repressor NrdR from Clavibacter sepedonicus (Clavibacter michiganensis subsp. sepedonicus).